Reading from the N-terminus, the 300-residue chain is Lipoyl synthase 2 (300 aa).

[4Fe-4S] cluster is bound by residues cysteine 46, cysteine 51, cysteine 57, cysteine 72, cysteine 76, cysteine 79, and serine 294. Positions 58–283 (YAQKTATFLL…GKLAREMGFS (226 aa)) constitute a Radical SAM core domain.

It belongs to the radical SAM superfamily. Lipoyl synthase family. [4Fe-4S] cluster serves as cofactor.

It localises to the cytoplasm. The enzyme catalyses [[Fe-S] cluster scaffold protein carrying a second [4Fe-4S](2+) cluster] + N(6)-octanoyl-L-lysyl-[protein] + 2 oxidized [2Fe-2S]-[ferredoxin] + 2 S-adenosyl-L-methionine + 4 H(+) = [[Fe-S] cluster scaffold protein] + N(6)-[(R)-dihydrolipoyl]-L-lysyl-[protein] + 4 Fe(3+) + 2 hydrogen sulfide + 2 5'-deoxyadenosine + 2 L-methionine + 2 reduced [2Fe-2S]-[ferredoxin]. It participates in protein modification; protein lipoylation via endogenous pathway; protein N(6)-(lipoyl)lysine from octanoyl-[acyl-carrier-protein]: step 2/2. Catalyzes the radical-mediated insertion of two sulfur atoms into the C-6 and C-8 positions of the octanoyl moiety bound to the lipoyl domains of lipoate-dependent enzymes, thereby converting the octanoylated domains into lipoylated derivatives. This chain is Lipoyl synthase 2, found in Nostoc sp. (strain PCC 7120 / SAG 25.82 / UTEX 2576).